The chain runs to 247 residues: MGYLRSSFIFSLLAFVTYTYAATIEVRNNCPYTVWAASTPIGGGRRLNKGQTWVINAPRGTKMARIWGRTGCNFNAAGRGSCQTGDCGGVLQCTGWGKPPNTLAEYALDQFSNLDFWDISLVDGFNIPMTFAPTKPSAGKCHAIHCTANINGECPRALKVPGGCNNPCTTFGGQQYCCTQGPCGPTELSKFFKKRCPDAYSYPQDDPTSTFTCPSGSTNYRVVFCPNGVADPNFPLEMPASTDEVAK.

Positions 1 to 21 (MGYLRSSFIFSLLAFVTYTYA) are cleaved as a signal peptide. 8 disulfides stabilise this stretch: cysteine 30–cysteine 225, cysteine 72–cysteine 82, cysteine 87–cysteine 93, cysteine 141–cysteine 213, cysteine 146–cysteine 196, cysteine 154–cysteine 164, cysteine 168–cysteine 177, and cysteine 178–cysteine 183.

It belongs to the thaumatin family.

This Solanum commersonii (Commerson's wild potato) protein is Osmotin-like protein OSML81.